The chain runs to 226 residues: Urease accessory protein UreF (226 aa).

This sequence belongs to the UreF family. As to quaternary structure, ureD, UreF and UreG form a complex that acts as a GTP-hydrolysis-dependent molecular chaperone, activating the urease apoprotein by helping to assemble the nickel containing metallocenter of UreC. The UreE protein probably delivers the nickel.

It localises to the cytoplasm. Functionally, required for maturation of urease via the functional incorporation of the urease nickel metallocenter. The polypeptide is Urease accessory protein UreF (Paraburkholderia xenovorans (strain LB400)).